Here is a 500-residue protein sequence, read N- to C-terminus: Kynurenine 3-monooxygenase (500 aa).

Belongs to the aromatic-ring hydroxylase family. KMO subfamily. Requires FAD as cofactor.

It is found in the mitochondrion outer membrane. It catalyses the reaction L-kynurenine + NADPH + O2 + H(+) = 3-hydroxy-L-kynurenine + NADP(+) + H2O. The protein operates within cofactor biosynthesis; NAD(+) biosynthesis; quinolinate from L-kynurenine: step 1/3. In terms of biological role, catalyzes the hydroxylation of L-kynurenine (L-Kyn) to form 3-hydroxy-L-kynurenine (L-3OHKyn). Required for synthesis of quinolinic acid. In Aspergillus terreus (strain NIH 2624 / FGSC A1156), this protein is Kynurenine 3-monooxygenase (bna4).